The chain runs to 253 residues: Snake venom serine protease homolog HS120 (253 aa).

The signal sequence occupies residues 1–18 (MVLIRVIANLLILQLSYA). Residues 19–24 (QKSSEL) constitute a propeptide that is removed on maturation. In terms of domain architecture, Peptidase S1 spans 25 to 244 (VIGGDECNIN…YLPWIQSIIA (220 aa)). 6 disulfide bridges follow: Cys31/Cys158, Cys49/Cys65, Cys98/Cys251, Cys137/Cys205, Cys169/Cys184, and Cys195/Cys220. Residues Asn116 and Asn165 are each glycosylated (N-linked (GlcNAc...) asparagine).

Belongs to the peptidase S1 family. Snake venom subfamily. In terms of tissue distribution, expressed by the venom gland.

It is found in the secreted. In terms of biological role, snake venom serine protease homolog that may act in the hemostasis system of the prey. This Bothrops jararaca (Jararaca) protein is Snake venom serine protease homolog HS120.